Here is a 63-residue protein sequence, read N- to C-terminus: Large ribosomal subunit protein bL28 (63 aa).

This sequence belongs to the bacterial ribosomal protein bL28 family.

This is Large ribosomal subunit protein bL28 from Brachyspira hyodysenteriae (strain ATCC 49526 / WA1).